The primary structure comprises 1722 residues: Signal-induced proliferation-associated 1-like protein 2 (1722 aa).

Disordered regions lie at residues M1–Q29 and S44–V72. Positions E57 to A66 are enriched in gly residues. A phosphoserine mark is found at S149, S380, and S384. The interval A362–D405 is disordered. Positions S384–S403 are enriched in basic and acidic residues. Residues L596 to L813 form the Rap-GAP domain. In terms of domain architecture, PDZ spans E951–E1027. Position 1030 is a phosphoserine (S1030). Disordered regions lie at residues H1068–G1246 and G1331–T1360. 2 stretches are compositionally biased toward low complexity: residues L1091–A1103 and S1120–P1131. The segment covering Y1195–D1218 has biased composition (basic and acidic residues). Positions S1220 to N1237 are enriched in low complexity. S1245 bears the Phosphoserine mark. Residues G1331–H1355 are compositionally biased toward low complexity. Residues S1461, S1472, S1478, S1488, S1549, S1552, and S1591 each carry the phosphoserine modification. Residues S1652–E1712 are a coiled coil.

This chain is Signal-induced proliferation-associated 1-like protein 2 (Sipa1l2), found in Mus musculus (Mouse).